The following is a 419-amino-acid chain: Putative zinc metalloprotease spr0242 (419 aa).

His-18 contacts Zn(2+). Residue Glu-19 is part of the active site. Residue His-22 coordinates Zn(2+). 3 helical membrane-spanning segments follow: residues Leu-169–Ile-191, Ile-345–Leu-367, and Glu-388–Trp-410.

This sequence belongs to the peptidase M50B family. The cofactor is Zn(2+).

It localises to the cell membrane. The protein is Putative zinc metalloprotease spr0242 of Streptococcus pneumoniae (strain ATCC BAA-255 / R6).